Reading from the N-terminus, the 197-residue chain is Guanylate kinase (197 aa).

Residue Ser2 is modified to N-acetylserine. In terms of domain architecture, Guanylate kinase-like spans 4-186; it reads PRPVVLSGPS…AYAELKEALS (183 aa). 14-19 serves as a coordination point for ATP; it reads GAGKST. 37–51 lines the substrate pocket; sequence SHTTRNPRPGEENGK. Residues Arg44, Arg137, and Arg148 contribute to the active site. ATP is bound at residue Arg137. 171–172 serves as a coordination point for ATP; it reads ND.

The protein belongs to the guanylate kinase family. Monomer. Interacts with RD3. In terms of tissue distribution, widely expressed.

The protein localises to the photoreceptor inner segment. Its subcellular location is the cytoplasm. The protein resides in the cytosol. It is found in the mitochondrion. The catalysed reaction is GMP + ATP = GDP + ADP. Its activity is regulated as follows. Up-regulated by RD3. Catalyzes the phosphorylation of GMP to GDP. Essential enzyme for recycling GMP and indirectly, cyclic GMP (cGMP). Involved in the cGMP metabolism in photoreceptors. It may also have a role in the survival and growth progression of some tumors. In addition to its physiological role, GUK1 is essential for converting prodrugs used for the treatment of cancers and viral infections into their pharmacologically active metabolites, most notably acyclovir, ganciclovir, and 6-thioguanine and its closely related analog 6-mercaptopurine. In Homo sapiens (Human), this protein is Guanylate kinase.